An 89-amino-acid chain; its full sequence is Small ribosomal subunit protein uS14A (89 aa).

The protein belongs to the universal ribosomal protein uS14 family. As to quaternary structure, part of the 30S ribosomal subunit. Contacts proteins S3 and S10.

Its function is as follows. Binds 16S rRNA, required for the assembly of 30S particles and may also be responsible for determining the conformation of the 16S rRNA at the A site. This chain is Small ribosomal subunit protein uS14A, found in Lactiplantibacillus plantarum (strain ATCC BAA-793 / NCIMB 8826 / WCFS1) (Lactobacillus plantarum).